The primary structure comprises 146 residues: Small ribosomal subunit protein uS9z (146 aa).

Belongs to the universal ribosomal protein uS9 family.

The polypeptide is Small ribosomal subunit protein uS9z (RPS16A) (Arabidopsis thaliana (Mouse-ear cress)).